The following is a 397-amino-acid chain: Phosphoglycerate kinase (397 aa).

Substrate contacts are provided by residues 21–23, Arg37, 60–63, Arg119, and Arg152; these read DFN and HLGR. ATP-binding positions include Lys203, Gly294, Glu325, and 354-357; that span reads GGDS.

This sequence belongs to the phosphoglycerate kinase family. In terms of assembly, monomer.

It is found in the cytoplasm. It catalyses the reaction (2R)-3-phosphoglycerate + ATP = (2R)-3-phospho-glyceroyl phosphate + ADP. It functions in the pathway carbohydrate degradation; glycolysis; pyruvate from D-glyceraldehyde 3-phosphate: step 2/5. The sequence is that of Phosphoglycerate kinase from Chlorobium limicola (strain DSM 245 / NBRC 103803 / 6330).